Reading from the N-terminus, the 184-residue chain is MASEEIISGMKTKMDKTIDLVKKDFGTVRTGRANPSLVEDIRVDYYGTLTPINQLGNISVPEPRMLVISPYDKGIMKDIEKAIQASGLGLQPSNDGVVIRIIIPELTGERRKELAKIVKSKSEEKKVAIRNIRRDAMEDLKKHTEGLSQDEIKTIQDRIQKTTDSYIDKISALTAEKEKEITTI.

Belongs to the RRF family.

The protein resides in the cytoplasm. Its function is as follows. Responsible for the release of ribosomes from messenger RNA at the termination of protein biosynthesis. May increase the efficiency of translation by recycling ribosomes from one round of translation to another. This is Ribosome-recycling factor from Leptospira borgpetersenii serovar Hardjo-bovis (strain JB197).